The primary structure comprises 275 residues: NH(3)-dependent NAD(+) synthetase (275 aa).

An ATP-binding site is contributed by 47–54 (GISGGQDS). Asp53 serves as a coordination point for Mg(2+). Arg141 provides a ligand contact to deamido-NAD(+). Thr161 provides a ligand contact to ATP. Glu166 contacts Mg(2+). Positions 174 and 181 each coordinate deamido-NAD(+). Positions 190 and 212 each coordinate ATP. Residue 261–262 (HK) participates in deamido-NAD(+) binding.

This sequence belongs to the NAD synthetase family. Homodimer.

It catalyses the reaction deamido-NAD(+) + NH4(+) + ATP = AMP + diphosphate + NAD(+) + H(+). Its pathway is cofactor biosynthesis; NAD(+) biosynthesis; NAD(+) from deamido-NAD(+) (ammonia route): step 1/1. Functionally, catalyzes the ATP-dependent amidation of deamido-NAD to form NAD. Uses ammonia as a nitrogen source. In Enterococcus faecalis (strain ATCC 700802 / V583), this protein is NH(3)-dependent NAD(+) synthetase.